Consider the following 498-residue polypeptide: Guanosine-5'-triphosphate,3'-diphosphate pyrophosphatase (498 aa).

It belongs to the GppA/Ppx family. GppA subfamily.

It carries out the reaction guanosine 3'-diphosphate 5'-triphosphate + H2O = guanosine 3',5'-bis(diphosphate) + phosphate + H(+). The protein operates within purine metabolism; ppGpp biosynthesis; ppGpp from GTP: step 2/2. Functionally, catalyzes the conversion of pppGpp to ppGpp. Guanosine pentaphosphate (pppGpp) is a cytoplasmic signaling molecule which together with ppGpp controls the 'stringent response', an adaptive process that allows bacteria to respond to amino acid starvation, resulting in the coordinated regulation of numerous cellular activities. The polypeptide is Guanosine-5'-triphosphate,3'-diphosphate pyrophosphatase (Pectobacterium carotovorum subsp. carotovorum (strain PC1)).